The following is a 496-amino-acid chain: Catalase isozyme 3 (496 aa).

The disordered stretch occupies residues 1 to 25; the sequence is MTMDPTKFRPSSSHDTTVTTTNAGA. Positions 9 to 23 are enriched in polar residues; that stretch reads RPSSSHDTTVTTTNA. Residues histidine 67 and asparagine 140 contribute to the active site. Tyrosine 351 lines the heme pocket. The tract at residues 402 to 422 is disordered; sequence PLRQAAPPTPLPPRPVAGRRE.

It belongs to the catalase family. Homotetramer. Heme serves as cofactor. As to expression, leaf mesophyll cells, pericarp, seedling roots and the coleoptile.

The protein localises to the mitochondrion. It catalyses the reaction 2 H2O2 = O2 + 2 H2O. Occurs in almost all aerobically respiring organisms and serves to protect cells from the toxic effects of hydrogen peroxide. Its levels are highest in the light period and are lowest in the dark period, hence it may be important for scavenging hydrogen peroxide at night, rather than during the day. The polypeptide is Catalase isozyme 3 (CAT3) (Zea mays (Maize)).